Here is a 1357-residue protein sequence, read N- to C-terminus: DNA-directed RNA polymerase subunit beta (1357 aa).

This sequence belongs to the RNA polymerase beta chain family. In terms of assembly, the RNAP catalytic core consists of 2 alpha, 1 beta, 1 beta' and 1 omega subunit. When a sigma factor is associated with the core the holoenzyme is formed, which can initiate transcription.

It catalyses the reaction RNA(n) + a ribonucleoside 5'-triphosphate = RNA(n+1) + diphosphate. DNA-dependent RNA polymerase catalyzes the transcription of DNA into RNA using the four ribonucleoside triphosphates as substrates. The chain is DNA-directed RNA polymerase subunit beta from Pseudomonas aeruginosa (strain UCBPP-PA14).